The primary structure comprises 227 residues: Cytochrome c oxidase subunit 2 (227 aa).

Residues 1 to 14 (MAYPFQMGLQDATS) lie on the Mitochondrial intermembrane side of the membrane. Residues 15–45 (PIMEELLHFHDHTLMIVFLISSLVLYIISLM) traverse the membrane as a helical segment. Residues 46-59 (LTTKLTHTSTMDAQ) lie on the Mitochondrial matrix side of the membrane. A helical transmembrane segment spans residues 60-87 (EVETIWTILPAIILILIALPSLRILYMM). Topologically, residues 88–227 (DEINNPSLTV…HFEKWSASLL (140 aa)) are mitochondrial intermembrane. Positions 161, 196, 198, 200, 204, and 207 each coordinate Cu cation. Glutamate 198 provides a ligand contact to Mg(2+).

The protein belongs to the cytochrome c oxidase subunit 2 family. As to quaternary structure, component of the cytochrome c oxidase (complex IV, CIV), a multisubunit enzyme composed of 14 subunits. The complex is composed of a catalytic core of 3 subunits MT-CO1, MT-CO2 and MT-CO3, encoded in the mitochondrial DNA, and 11 supernumerary subunits COX4I, COX5A, COX5B, COX6A, COX6B, COX6C, COX7A, COX7B, COX7C, COX8 and NDUFA4, which are encoded in the nuclear genome. The complex exists as a monomer or a dimer and forms supercomplexes (SCs) in the inner mitochondrial membrane with NADH-ubiquinone oxidoreductase (complex I, CI) and ubiquinol-cytochrome c oxidoreductase (cytochrome b-c1 complex, complex III, CIII), resulting in different assemblies (supercomplex SCI(1)III(2)IV(1) and megacomplex MCI(2)III(2)IV(2)). Found in a complex with TMEM177, COA6, COX18, COX20, SCO1 and SCO2. Interacts with TMEM177 in a COX20-dependent manner. Interacts with COX20. Interacts with COX16. Requires Cu cation as cofactor.

The protein resides in the mitochondrion inner membrane. It carries out the reaction 4 Fe(II)-[cytochrome c] + O2 + 8 H(+)(in) = 4 Fe(III)-[cytochrome c] + 2 H2O + 4 H(+)(out). Functionally, component of the cytochrome c oxidase, the last enzyme in the mitochondrial electron transport chain which drives oxidative phosphorylation. The respiratory chain contains 3 multisubunit complexes succinate dehydrogenase (complex II, CII), ubiquinol-cytochrome c oxidoreductase (cytochrome b-c1 complex, complex III, CIII) and cytochrome c oxidase (complex IV, CIV), that cooperate to transfer electrons derived from NADH and succinate to molecular oxygen, creating an electrochemical gradient over the inner membrane that drives transmembrane transport and the ATP synthase. Cytochrome c oxidase is the component of the respiratory chain that catalyzes the reduction of oxygen to water. Electrons originating from reduced cytochrome c in the intermembrane space (IMS) are transferred via the dinuclear copper A center (CU(A)) of subunit 2 and heme A of subunit 1 to the active site in subunit 1, a binuclear center (BNC) formed by heme A3 and copper B (CU(B)). The BNC reduces molecular oxygen to 2 water molecules using 4 electrons from cytochrome c in the IMS and 4 protons from the mitochondrial matrix. The sequence is that of Cytochrome c oxidase subunit 2 (MT-CO2) from Ailurus fulgens (Himalayan red panda).